We begin with the raw amino-acid sequence, 1256 residues long: Protein flightless-1 (1256 aa).

LRR repeat units lie at residues 4 to 28 (LPFV…MRQM), 29 to 51 (SRVQ…LGHL), 52 to 74 (QKLE…LTEL), 75 to 99 (SCLR…LFHL), 100 to 122 (EELT…LERA), 124 to 145 (NLIV…LFIH), 147 to 169 (TDLL…TRRL), 171 to 192 (NLKT…QLPS), 218 to 241 (LANL…VYNV), 243 to 264 (TLVR…VELW), 265 to 287 (QRLE…LCKL), 289 to 312 (KLRR…IGKL), 313 to 335 (GALE…LCRC), 336 to 358 (GALK…IHLL), and 360 to 381 (GLDQ…PSEA). The interval 405 to 476 (AAVPPSMPSS…ESLKPKRWDE (72 aa)) is disordered. Positions 431-476 (PRSEGDQDAAKVLKGMKDVAKDKDNEAGAVPEDGKPESLKPKRWDE) are enriched in basic and acidic residues. Gelsolin-like repeat units lie at residues 512 to 589 (IEEV…EQFL), 633 to 703 (EPVA…AEFW), 749 to 822 (VELP…MQIF), and 1168 to 1242 (EKCA…SRRF).

The protein belongs to the villin/gelsolin family. As to expression, found in ovaries, larval fat bodies, brain and adult thorax.

Its function is as follows. May play a key role in embryonic cellularization by interacting with both the cytoskeleton and other cellular components. Alternatively, it may play a structural role in indirect flight muscle. Vital for embryonic development. The chain is Protein flightless-1 (fliI) from Drosophila melanogaster (Fruit fly).